A 263-amino-acid chain; its full sequence is Transcription factor 19-like protein (263 aa).

One can recognise an FHA domain in the interval 31 to 88 (YGLGCRADLCDVALRPQQEPGLISGVHAELHAELQGDDWRVSLEDHSSQGTLVNNVRL). Ser78 carries the phosphoserine modification. Disordered regions lie at residues 140–164 (SKGE…PLST) and 189–225 (LTFS…RKSA).

It is found in the nucleus. Its function is as follows. Potential transcription factor that may play a role in the regulation of genes involved in cell cycle G1/S transition. May bind to regulatory elements of genes, including the promoter of the transcription factor FOXO1. The chain is Transcription factor 19-like protein (Tcf19) from Mus musculus (Mouse).